Reading from the N-terminus, the 311-residue chain is Fucose-specific lectin (311 aa).

6 repeat units span residues 1–53 (MSTP…KNVI), 54–103 (AKAK…AGAK), 104–151 (FTVA…EGTN), 152–209 (LGVA…FDKA), 210–256 (PPRC…DKRT), and 257–311 (ITPV…PPAE). The 6 X approximate tandem repeats stretch occupies residues 1 to 311 (MSTPGAQEVL…LGRRALPPAE (311 aa)). Positions 25, 37, 44, 73, 85, 94, 126, 138, 146, 177, 189, 198, 230, 242, 277, and 291 each coordinate beta-L-fucose.

This sequence belongs to the fungal fucose-specific lectin family. As to quaternary structure, homodimer.

In terms of biological role, lectin that specifically binds to L-fucose and weakly reacts with mannose and N-acetyl-neuraminic acid. Has strongest preference for the alpha-1,6-fucosylated chain (core fucose) on glycoproteins among alpha-1,2-, alpha-1,3-, alpha-1,4-, and alpha-1,6-fucosylated chains. Binds to fucose residues of IgE in mice and human, causing antigen-independent IgE-mediated mast cell activation and anaphylactoid reactions in mice and is possibly implicated in allergic response to Aspergillus oryzae in humans. Induces secretion of pro-inflammatory cytokines IL6 and IL8 implicated in ocular diseases such as mycotic keratitis, probably through its interaction with host toll-like receptors TLR2 and TLR4, followed by up-regulation of pro-inflammatory cytokines. The sequence is that of Fucose-specific lectin from Aspergillus oryzae (strain ATCC 42149 / RIB 40) (Yellow koji mold).